We begin with the raw amino-acid sequence, 339 residues long: MAAEDELQLPRLPELFETGRQLLDEVEVATEPAGSRIVQEKVFKGLDLLEKAAEMLSQLDLFSRNEDLEEIASTDLKYLLVPAFQGALTMKQVNPSKRLDHLQRAREHFINYLTQCHCYHVAEFELPKTMNNSAENHTANSSMAYPSLVAMASQRQAKIQRYKQKKELEHRLSAMKSAVESGQADDERVREYYLLHLQRWIDISLEEIESIDQEIKILRERDSSREASTSNSSRQERPPVKPFILTRNMAQAKVFGAGYPSLPTMTVSDWYEQHRKYGALPDQGIAKAAPEEFRKAAQQQEEQEEKEEEDDEQTLHRAREWDDWKDTHPRGYGNRQNMG.

An N-acetylalanine modification is found at Ala2. A UIM domain is found at 46-60 (LDLLEKAAEMLSQLD). The interval 98 to 202 (RLDHLQRARE…YLLHLQRWID (105 aa)) is interaction with PPP2CA. Disordered regions lie at residues 221–243 (RDSS…VKPF) and 289–339 (APEE…QNMG). Positions 225 to 290 (REASTSNSSR…PDQGIAKAAP (66 aa)) are interaction with MID1. Lys241 carries the N6-acetyllysine modification. Residues 301–312 (EEQEEKEEEDDE) are compositionally biased toward acidic residues. Residues 313 to 329 (QTLHRAREWDDWKDTHP) are compositionally biased toward basic and acidic residues.

Belongs to the IGBP1/TAP42 family. In terms of assembly, interacts with partially folded PPP2CA, but not with the fully active protein. Interacts with PPP2CB, and with PP4 and PP6. Interacts with MID1 and MID2. Interacts with ubiquitin. Phosphorylated. Post-translationally, monoubiquitination by MID1 triggers calpain-mediated cleavage and switches IGBP1 activity from protective to destructive. As to expression, ubiquitously expressed with highest levels in heart, skeletal muscle and pancreas.

It is found in the cytoplasm. Its function is as follows. Associated to surface IgM-receptor; may be involved in signal transduction. Involved in regulation of the catalytic activity of the phosphatases PP2A, PP4 and PP6 by protecting their partially folded catalytic subunits from degradative polyubiquitination until they associate with regulatory subunits. This Homo sapiens (Human) protein is Immunoglobulin-binding protein 1 (IGBP1).